A 378-amino-acid chain; its full sequence is Protein RecA (378 aa).

ATP is bound at residue 66 to 73 (GPESSGKT). Residues 333-378 (PDAAKAEAATDAAAAADTAGTDDAAKSVPAPASKTAKATKATAVKS) form a disordered region. The span at 338–378 (AEAATDAAAAADTAGTDDAAKSVPAPASKTAKATKATAVKS) shows a compositional bias: low complexity.

Belongs to the RecA family.

The protein resides in the cytoplasm. Its function is as follows. Can catalyze the hydrolysis of ATP in the presence of single-stranded DNA, the ATP-dependent uptake of single-stranded DNA by duplex DNA, and the ATP-dependent hybridization of homologous single-stranded DNAs. It interacts with LexA causing its activation and leading to its autocatalytic cleavage. The polypeptide is Protein RecA (Streptomyces venezuelae (strain ATCC 10712 / CBS 650.69 / DSM 40230 / JCM 4526 / NBRC 13096 / PD 04745)).